Consider the following 161-residue polypeptide: MNLNATILGQAISFVLFVWFCMKYIWPPIILAIETRQKEIKESLTNAKKARDELYILEKKIHQNIIDAKQKASNILNSANKQKVSILEDARNQALEESKKIILNTQSEINIAITHARKNLHKEVVDLSISMAEKIIKKNISKDDNQELLDELVTSLSQVKN.

A helical membrane pass occupies residues 11–31 (AISFVLFVWFCMKYIWPPIIL).

The protein belongs to the ATPase B chain family. In terms of assembly, F-type ATPases have 2 components, F(1) - the catalytic core - and F(0) - the membrane proton channel. F(1) has five subunits: alpha(3), beta(3), gamma(1), delta(1), epsilon(1). F(0) has three main subunits: a(1), b(2) and c(10-14). The alpha and beta chains form an alternating ring which encloses part of the gamma chain. F(1) is attached to F(0) by a central stalk formed by the gamma and epsilon chains, while a peripheral stalk is formed by the delta and b chains.

The protein resides in the cell membrane. Functionally, f(1)F(0) ATP synthase produces ATP from ADP in the presence of a proton or sodium gradient. F-type ATPases consist of two structural domains, F(1) containing the extramembraneous catalytic core and F(0) containing the membrane proton channel, linked together by a central stalk and a peripheral stalk. During catalysis, ATP synthesis in the catalytic domain of F(1) is coupled via a rotary mechanism of the central stalk subunits to proton translocation. In terms of biological role, component of the F(0) channel, it forms part of the peripheral stalk, linking F(1) to F(0). The polypeptide is ATP synthase subunit b (Buchnera aphidicola subsp. Acyrthosiphon pisum (strain APS) (Acyrthosiphon pisum symbiotic bacterium)).